A 117-amino-acid chain; its full sequence is Large ribosomal subunit protein bL17 (117 aa).

This sequence belongs to the bacterial ribosomal protein bL17 family. As to quaternary structure, part of the 50S ribosomal subunit. Contacts protein L32.

The sequence is that of Large ribosomal subunit protein bL17 from Neorickettsia sennetsu (strain ATCC VR-367 / Miyayama) (Ehrlichia sennetsu).